A 130-amino-acid chain; its full sequence is Small ribosomal subunit protein uS9 (130 aa).

The protein belongs to the universal ribosomal protein uS9 family.

This chain is Small ribosomal subunit protein uS9, found in Saccharophagus degradans (strain 2-40 / ATCC 43961 / DSM 17024).